A 289-amino-acid polypeptide reads, in one-letter code: Phosphatidylglycerol--prolipoprotein diacylglyceryl transferase (289 aa).

Transmembrane regions (helical) follow at residues 21–41 (IGPL…LLGI), 53–73 (IDPN…IPAA), 95–115 (IWHG…ALIL), and 122–142 (IPIW…QAIG). Residue arginine 143 coordinates a 1,2-diacyl-sn-glycero-3-phospho-(1'-sn-glycerol). 3 helical membrane passes run 182–202 (PTFL…IWLF), 215–235 (GVMT…IEGL), and 247–267 (IAQM…VWIY).

Belongs to the Lgt family.

It is found in the cell inner membrane. It catalyses the reaction L-cysteinyl-[prolipoprotein] + a 1,2-diacyl-sn-glycero-3-phospho-(1'-sn-glycerol) = an S-1,2-diacyl-sn-glyceryl-L-cysteinyl-[prolipoprotein] + sn-glycerol 1-phosphate + H(+). The protein operates within protein modification; lipoprotein biosynthesis (diacylglyceryl transfer). Functionally, catalyzes the transfer of the diacylglyceryl group from phosphatidylglycerol to the sulfhydryl group of the N-terminal cysteine of a prolipoprotein, the first step in the formation of mature lipoproteins. This Synechococcus elongatus (strain ATCC 33912 / PCC 7942 / FACHB-805) (Anacystis nidulans R2) protein is Phosphatidylglycerol--prolipoprotein diacylglyceryl transferase.